A 707-amino-acid chain; its full sequence is Choline transporter-like protein 4 (707 aa).

The Cytoplasmic portion of the chain corresponds to 1 to 32 (MGKKQKENEAYGNSAKYDPSFRGPIKNRGCTD). The helical transmembrane segment at 33–53 (IICCVLFLVFILGYIVVGLVA) threads the bilayer. Over 54 to 227 (WVYGDPRQVL…KIFEDFAQSW (174 aa)) the chain is Extracellular. N-linked (GlcNAc...) asparagine glycans are attached at residues asparagine 67, asparagine 185, asparagine 195, and asparagine 196. A helical transmembrane segment spans residues 228–248 (YWILVALGVALVLSLLFILLL). Over 249–250 (RL) the chain is Cytoplasmic. Residues 251–271 (VAAPLVLLLIVGVLAVLAYGI) form a helical membrane-spanning segment. Topologically, residues 272–307 (YHCWQQYRELRDQGVSITQLGFTANLSAYQNVKETW) are extracellular. The N-linked (GlcNAc...) asparagine glycan is linked to asparagine 296. Residues 308 to 328 (LAALIILAVLEGVLLLMLIFL) form a helical membrane-spanning segment. Topologically, residues 329 to 356 (RQRIRIAIALLKEASRAVGQMMSTMFYP) are cytoplasmic. A helical membrane pass occupies residues 357-377 (LVTFVLLVICIGYWAVTALYL). At 378 to 452 (ATSGQPQYVY…GILGLFWTVN (75 aa)) the chain is on the extracellular side. 3 N-linked (GlcNAc...) asparagine glycosylation sites follow: asparagine 391, asparagine 403, and asparagine 413. Residues 453 to 473 (WVLALGQCVLAGAFASFYWAF) traverse the membrane as a helical segment. Topologically, residues 474-498 (HKPRDIPTFPLSSAFIRTLRYHTGS) are cytoplasmic. The chain crosses the membrane as a helical span at residues 499–519 (LAFGALILTLVQIARVILEYI). Residues 520–557 (DHKLRGSQNPVARCIICCFKCCLWCLEKFIKFLNRNAY) lie on the Extracellular side of the membrane. A helical membrane pass occupies residues 558–578 (IMIAIYGKNFCVSAKNAFMLL). The Cytoplasmic portion of the chain corresponds to 579 to 594 (MRNVVRVVVLDKVTDL). A helical membrane pass occupies residues 595–615 (LLFFGKLLVVGGVGVLSFFFF). The Extracellular portion of the chain corresponds to 616–635 (SGRIKGLGKDFKNPDLNYYW). A helical transmembrane segment spans residues 636-656 (LPIMTSIMGAYVIASGFFSVF). Residues 657–707 (GMCVDTLFLCFLEDLERNDGSQERPYYMPKALLKILGKKNEVPTGGKNRKK) are Cytoplasmic-facing.

Belongs to the CTL (choline transporter-like) family. Post-translationally, N-glycosylated; N-glycosylation of Asn-67 and Asn-391 is required for a proper thiamine pyrophosphate uptake. As to expression, highly expressed in intestine, kidney and stomach. Also expressed in testis and lung.

The protein resides in the membrane. It localises to the apical cell membrane. The enzyme catalyses choline(out) + n H(+)(in) = choline(in) + n H(+)(out). It catalyses the reaction thiamine diphosphate(out) = thiamine diphosphate(in). Functionally, choline transporter that plays a role in the choline-acetylcholine system and is required to the efferent innervation of hair cells in the olivocochlear bundle for the maintenance of physiological function of outer hair cells and the protection of hair cells from acoustic injury. Also described as a thiamine pyrophosphate transporter in colon, may mediate the absorption of microbiota-generated thiamine pyrophosphate and contribute to host thiamine (vitamin B1) homeostasis. This Rattus norvegicus (Rat) protein is Choline transporter-like protein 4.